The chain runs to 542 residues: CTP synthase (542 aa).

An amidoligase domain region spans residues 1 to 265 (MARYVFITGG…DSEVLCAFGI (265 aa)). CTP is bound at residue serine 13. Serine 13 contributes to the UTP binding site. 14-19 (SLGKGI) is a binding site for ATP. Tyrosine 54 is an L-glutamine binding site. Aspartate 71 contributes to the ATP binding site. Residues aspartate 71 and glutamate 139 each coordinate Mg(2+). CTP contacts are provided by residues 146-148 (DIE), 186-191 (KTKPTQ), and lysine 222. UTP is bound by residues 186 to 191 (KTKPTQ) and lysine 222. The 251-residue stretch at 291–541 (TIAVVGKYTG…IEAAVEQSRL (251 aa)) folds into the Glutamine amidotransferase type-1 domain. Alanine 353 provides a ligand contact to L-glutamine. The Nucleophile; for glutamine hydrolysis role is filled by cysteine 380. Residues 381–384 (FGMQ), glutamate 404, and arginine 469 contribute to the L-glutamine site. Active-site residues include histidine 514 and glutamate 516.

The protein belongs to the CTP synthase family. In terms of assembly, homotetramer.

It carries out the reaction UTP + L-glutamine + ATP + H2O = CTP + L-glutamate + ADP + phosphate + 2 H(+). The catalysed reaction is L-glutamine + H2O = L-glutamate + NH4(+). The enzyme catalyses UTP + NH4(+) + ATP = CTP + ADP + phosphate + 2 H(+). It participates in pyrimidine metabolism; CTP biosynthesis via de novo pathway; CTP from UDP: step 2/2. With respect to regulation, allosterically activated by GTP, when glutamine is the substrate; GTP has no effect on the reaction when ammonia is the substrate. The allosteric effector GTP functions by stabilizing the protein conformation that binds the tetrahedral intermediate(s) formed during glutamine hydrolysis. Inhibited by the product CTP, via allosteric rather than competitive inhibition. Functionally, catalyzes the ATP-dependent amination of UTP to CTP with either L-glutamine or ammonia as the source of nitrogen. Regulates intracellular CTP levels through interactions with the four ribonucleotide triphosphates. This chain is CTP synthase, found in Bartonella tribocorum (strain CIP 105476 / IBS 506).